Reading from the N-terminus, the 720-residue chain is Cyclopenase penL (720 aa).

Positions 137, 141, and 313 each coordinate Cu cation.

Belongs to the tyrosinase family. Cu(2+) is required as a cofactor.

It catalyses the reaction (-)-cyclopenine = viridicatin + methyl isocyanate + H(+). The enzyme catalyses (-)-4'-methoxycyclopenine = 4'-methoxyviridicatin + methyl isocyanate + H(+). It functions in the pathway secondary metabolite biosynthesis. The protein operates within alkaloid biosynthesis. It participates in mycotoxin biosynthesis. Its function is as follows. Cyclopenase; part of the gene cluster that mediates the biosynthesis of penigequinolones, potent insecticidal alkaloids that contain a highly modified 10-carbon prenyl group. The first stage is catalyzed by the nonribosomal peptide synthetase penN that condenses anthranilic acid and O-methyl-L-tyrosine to produce 4'-methoxycyclopeptin. 4'-methoxycyclopeptin is then converted to 4'-methoxydehydrocyclopeptin by the ketoglutarate-dependent dioxygenase penM through dehydrogenation to form a double bond between C-alpha and C-beta of the O-methyltyrosine side chain. PenM also converts its first product methoxydehydrocyclopeptin to 4'-methoxycyclopenin. The following conversion of 4'methoxycyclopenin into 4'-methoxyviridicatin is catalyzed by the cyclopenase penL. 4'-methoxyviridicatin is the precursor of quinolone natural products, and is further converted to quinolinone B. The prenyltransferase penI then catalyzes the canonical Friedel-Crafts alkylation of quinolinone B with dimethylallyl cation to yield dimethylallyl quinolone, which is subjected to FAD-dependent dehydrogenation by the FAD-linked oxidoreductase penH to yield conjugated aryl diene. The delta(3') double bond then serves as the site of the second alkylation with DMAPP catalyzed by the prenyltransferase penG to yield a carbenium ion intermediate, which can be attacked by H(2)O to yield a styrenyl quinolone containing a C3'-hydroxyprenyl chain, or undergo cyclization to yield yaequinolones J1 and J2. The conversion of the styrenyl quinolone into the tetrahydrofuran-containing yaequinolone C is performed by the FAD-dependent monooxygenase penE and involves epoxidation of the terminal C7'-C8' olefin, followed by epoxide ring opening initiated by the C3' hydroxyl group. The predicted cysteine hydrolase penJ acts as an epoxide hydrolase that enhances the rate of the 5-exo-tet cyclization step, increasing the yield of yaequinolone C. PenF catalyzes the cationic rearrangement of the epoxide formed by penE (before ring opening to produce yaequinolone C) into yaequinolone D. Finally, the short-chain dehydrogenase/reductase (SDR)-like reductase penD, catalyzes both the dehydration of yaequinolone D and the reduction of the resulting oxonium to yield penigequinolone. The polypeptide is Cyclopenase penL (Penicillium thymicola).